The chain runs to 309 residues: Homoserine kinase (309 aa).

95–105 (PHGRGLGSSSA) is a binding site for ATP.

The protein belongs to the GHMP kinase family. Homoserine kinase subfamily.

Its subcellular location is the cytoplasm. The enzyme catalyses L-homoserine + ATP = O-phospho-L-homoserine + ADP + H(+). It functions in the pathway amino-acid biosynthesis; L-threonine biosynthesis; L-threonine from L-aspartate: step 4/5. In terms of biological role, catalyzes the ATP-dependent phosphorylation of L-homoserine to L-homoserine phosphate. The protein is Homoserine kinase of Streptomyces coelicolor (strain ATCC BAA-471 / A3(2) / M145).